Here is a 490-residue protein sequence, read N- to C-terminus: Protein nucleotidyltransferase YdiU (490 aa).

Residues glycine 92, glycine 94, arginine 95, lysine 114, aspartate 126, glycine 127, arginine 177, and arginine 184 each contribute to the ATP site. Aspartate 256 serves as the catalytic Proton acceptor. Positions 257 and 266 each coordinate Mg(2+). Aspartate 266 is a binding site for ATP.

The protein belongs to the SELO family. It depends on Mg(2+) as a cofactor. Mn(2+) serves as cofactor.

It catalyses the reaction L-seryl-[protein] + ATP = 3-O-(5'-adenylyl)-L-seryl-[protein] + diphosphate. It carries out the reaction L-threonyl-[protein] + ATP = 3-O-(5'-adenylyl)-L-threonyl-[protein] + diphosphate. The enzyme catalyses L-tyrosyl-[protein] + ATP = O-(5'-adenylyl)-L-tyrosyl-[protein] + diphosphate. The catalysed reaction is L-histidyl-[protein] + UTP = N(tele)-(5'-uridylyl)-L-histidyl-[protein] + diphosphate. It catalyses the reaction L-seryl-[protein] + UTP = O-(5'-uridylyl)-L-seryl-[protein] + diphosphate. It carries out the reaction L-tyrosyl-[protein] + UTP = O-(5'-uridylyl)-L-tyrosyl-[protein] + diphosphate. Functionally, nucleotidyltransferase involved in the post-translational modification of proteins. It can catalyze the addition of adenosine monophosphate (AMP) or uridine monophosphate (UMP) to a protein, resulting in modifications known as AMPylation and UMPylation. This is Protein nucleotidyltransferase YdiU from Bordetella avium (strain 197N).